A 480-amino-acid polypeptide reads, in one-letter code: Phenolic acid decarboxylase (480 aa).

N163, H185, and E227 together coordinate Mn(2+). Residues 163–168 (NVGTYR) and 184–185 (MH) contribute to the prenylated FMN site. The active-site Proton donor is E278. The tract at residues 443–466 (TTPVPPEPNPRETQLLDPPDGTEE) is disordered.

Belongs to the UbiD family. YclC subfamily. As to quaternary structure, homohexamer. Requires prenylated FMN as cofactor. Mn(2+) is required as a cofactor.

The enzyme catalyses 4-hydroxybenzoate + H(+) = phenol + CO2. It catalyses the reaction 3,4-dihydroxybenzoate + H(+) = catechol + CO2. Inhibited by Zn(2+), (2,3,4)-trihydroxybenzoate and (3,4,5)-trihydroxybenzoate. Ammonium and rubidium ions decrease the activity of the carboxylation of 3,4-dihydroxybenzoate by about 20%. In terms of biological role, involved in the non-oxidative decarboxylation and detoxification of phenolic derivatives under anaerobic conditions. Oxygen-sensitive phenolic acid decarboxylase that catalyzes the reversible decarboxylation of 4-hydroxybenzoate and 3,4-dihydroxybenzoate. The chain is Phenolic acid decarboxylase from Sedimentibacter hydroxybenzoicus (Clostridium hydroxybenzoicum).